A 221-amino-acid polypeptide reads, in one-letter code: UPF0502 protein PSPTO_2686 (221 aa).

The protein belongs to the UPF0502 family.

This Pseudomonas syringae pv. tomato (strain ATCC BAA-871 / DC3000) protein is UPF0502 protein PSPTO_2686.